A 420-amino-acid chain; its full sequence is Gamma-glutamyl phosphate reductase (420 aa).

This sequence belongs to the gamma-glutamyl phosphate reductase family.

Its subcellular location is the cytoplasm. It catalyses the reaction L-glutamate 5-semialdehyde + phosphate + NADP(+) = L-glutamyl 5-phosphate + NADPH + H(+). It functions in the pathway amino-acid biosynthesis; L-proline biosynthesis; L-glutamate 5-semialdehyde from L-glutamate: step 2/2. Its function is as follows. Catalyzes the NADPH-dependent reduction of L-glutamate 5-phosphate into L-glutamate 5-semialdehyde and phosphate. The product spontaneously undergoes cyclization to form 1-pyrroline-5-carboxylate. The protein is Gamma-glutamyl phosphate reductase of Streptococcus sanguinis (strain SK36).